Here is a 118-residue protein sequence, read N- to C-terminus: Small ribosomal subunit protein uS10 (118 aa).

S37 carries the phosphoserine modification.

The protein belongs to the universal ribosomal protein uS10 family. Component of the small ribosomal subunit (SSU). Mature yeast ribosomes consist of a small (40S) and a large (60S) subunit. The 40S small subunit contains 1 molecule of ribosomal RNA (18S rRNA) and at least 33 different proteins. The large 60S subunit contains 3 rRNA molecules (25S, 5.8S and 5S rRNA) and at least 46 different proteins.

It is found in the cytoplasm. Functionally, component of the ribosome, a large ribonucleoprotein complex responsible for the synthesis of proteins in the cell. The small ribosomal subunit (SSU) binds messenger RNAs (mRNAs) and translates the encoded message by selecting cognate aminoacyl-transfer RNA (tRNA) molecules. The large subunit (LSU) contains the ribosomal catalytic site termed the peptidyl transferase center (PTC), which catalyzes the formation of peptide bonds, thereby polymerizing the amino acids delivered by tRNAs into a polypeptide chain. The nascent polypeptides leave the ribosome through a tunnel in the LSU and interact with protein factors that function in enzymatic processing, targeting, and the membrane insertion of nascent chains at the exit of the ribosomal tunnel. The chain is Small ribosomal subunit protein uS10 (rps20) from Schizosaccharomyces pombe (strain 972 / ATCC 24843) (Fission yeast).